The chain runs to 438 residues: Trigger factor (438 aa).

The 86-residue stretch at 170–255 folds into the PPIase FKBP-type domain; the sequence is GDTVVIDFDG…IHELKKLETP (86 aa).

It belongs to the FKBP-type PPIase family. Tig subfamily.

The protein resides in the cytoplasm. It catalyses the reaction [protein]-peptidylproline (omega=180) = [protein]-peptidylproline (omega=0). In terms of biological role, involved in protein export. Acts as a chaperone by maintaining the newly synthesized protein in an open conformation. Functions as a peptidyl-prolyl cis-trans isomerase. The protein is Trigger factor (tig) of Oenococcus oeni (Leuconostoc oenos).